We begin with the raw amino-acid sequence, 79 residues long: Putative membrane protein insertion efficiency factor (79 aa).

It belongs to the UPF0161 family.

The protein localises to the cell inner membrane. Functionally, could be involved in insertion of integral membrane proteins into the membrane. The chain is Putative membrane protein insertion efficiency factor from Cytophaga hutchinsonii (strain ATCC 33406 / DSM 1761 / CIP 103989 / NBRC 15051 / NCIMB 9469 / D465).